A 732-amino-acid chain; its full sequence is Polyribonucleotide nucleotidyltransferase (732 aa).

Mg(2+)-binding residues include D503 and D509. The KH domain maps to 570 to 629 (PRLTAIQVPVESIGLIIGKGGETIRSITEETGAEINIEDDGTVTIACSSNEGTKGAVEII). One can recognise an S1 motif domain in the interval 639 to 713 (GTVYIGKVRD…GKTRFALSIK (75 aa)).

Belongs to the polyribonucleotide nucleotidyltransferase family. It depends on Mg(2+) as a cofactor.

It localises to the cytoplasm. The catalysed reaction is RNA(n+1) + phosphate = RNA(n) + a ribonucleoside 5'-diphosphate. In terms of biological role, involved in mRNA degradation. Catalyzes the phosphorolysis of single-stranded polyribonucleotides processively in the 3'- to 5'-direction. The protein is Polyribonucleotide nucleotidyltransferase of Chlorobium phaeovibrioides (strain DSM 265 / 1930) (Prosthecochloris vibrioformis (strain DSM 265)).